We begin with the raw amino-acid sequence, 74 residues long: Amphipathic peptide CT1 (74 aa).

The first 23 residues, 1 to 23 (MKTQIVILFISMIMLQMFVQIEG), serve as a signal peptide directing secretion. Val37 is subject to Valine amide. Residues 41–74 (GLRNLDDLDDLDLDHLFDSDVSDADLRLLKQMFR) constitute a propeptide that is removed on maturation.

Belongs to the non-disulfide-bridged peptide (NDBP) superfamily. Short antimicrobial peptide (group 4) family. In terms of tissue distribution, expressed by the venom gland.

The protein localises to the secreted. It is found in the target cell membrane. Its function is as follows. Antimicrobial peptide that is rapidly bactericidal against Gram-positive bacteria (MIC=12.5 ug/ml against S.aureus, and MIC=100 ug/ml against M.luteus). Is also active against clinical antibiotics-resistant bacterial strains. In Scorpiops tibetanus (Scorpion), this protein is Amphipathic peptide CT1.